A 368-amino-acid chain; its full sequence is tRNA-specific 2-thiouridylase MnmA (368 aa).

Residues 11-18 and Met-37 contribute to the ATP site; that span reads GMSGGVDS. Residues 97-99 form an interaction with target base in tRNA region; the sequence is NPD. Cys-102 (nucleophile) is an active-site residue. Cys-102 and Cys-199 form a disulfide bridge. Residue Gly-127 participates in ATP binding. The segment at 149-151 is interaction with tRNA; sequence KDQ. Cys-199 (cysteine persulfide intermediate) is an active-site residue. The segment at 311–312 is interaction with tRNA; sequence RY.

The protein belongs to the MnmA/TRMU family. In terms of assembly, interacts with TusE.

It localises to the cytoplasm. It carries out the reaction S-sulfanyl-L-cysteinyl-[protein] + uridine(34) in tRNA + AH2 + ATP = 2-thiouridine(34) in tRNA + L-cysteinyl-[protein] + A + AMP + diphosphate + H(+). Functionally, catalyzes the 2-thiolation of uridine at the wobble position (U34) of tRNA(Lys), tRNA(Glu) and tRNA(Gln), leading to the formation of s(2)U34, the first step of tRNA-mnm(5)s(2)U34 synthesis. Sulfur is provided by IscS, via a sulfur-relay system. Binds ATP and its substrate tRNAs. The sequence is that of tRNA-specific 2-thiouridylase MnmA from Salmonella choleraesuis (strain SC-B67).